A 212-amino-acid chain; its full sequence is Large ribosomal subunit protein uL3 (212 aa).

Residue Gln-153 is modified to N5-methylglutamine.

Belongs to the universal ribosomal protein uL3 family. As to quaternary structure, part of the 50S ribosomal subunit. Forms a cluster with proteins L14 and L19. Methylated by PrmB.

One of the primary rRNA binding proteins, it binds directly near the 3'-end of the 23S rRNA, where it nucleates assembly of the 50S subunit. The chain is Large ribosomal subunit protein uL3 from Acinetobacter baylyi (strain ATCC 33305 / BD413 / ADP1).